A 590-amino-acid polypeptide reads, in one-letter code: Potassium-transporting ATPase potassium-binding subunit (590 aa).

A run of 12 helical transmembrane segments spans residues 3–23 (AFLLQLAIYLVVLLVLAKPLG), 63–83 (HYALAVIVVNVLGALAVYALQ), 134–154 (GLAVQNFLSAATGIAVVIALI), 177–197 (VYVLLPLSIIVSVFFVSQGVI), 284–304 (FVQMLAIFIIPAALCFTFGGM), 312–332 (WAVLAAMTVLFVVLAVFLAWA), 359–379 (FGIVASSLFATITTAASCGAV), 388–408 (ALGGFVPMFLMQLGEVVFGGV), 411–431 (GLYGMLVYAILAVFIAGLMIG), 451–471 (IAILVTPLLVLVGTAVAVVVT), 515–535 (LALGICMWLGRFWIIVPVLAM), and 558–578 (LFVVLLIGSVLLVGALTYIPA).

This sequence belongs to the KdpA family. The system is composed of three essential subunits: KdpA, KdpB and KdpC.

The protein localises to the cell inner membrane. In terms of biological role, part of the high-affinity ATP-driven potassium transport (or Kdp) system, which catalyzes the hydrolysis of ATP coupled with the electrogenic transport of potassium into the cytoplasm. This subunit binds the periplasmic potassium ions and delivers the ions to the membrane domain of KdpB through an intramembrane tunnel. The polypeptide is Potassium-transporting ATPase potassium-binding subunit (Ralstonia pickettii (strain 12J)).